A 222-amino-acid polypeptide reads, in one-letter code: UPF0502 protein XCC4136 (222 aa).

Belongs to the UPF0502 family.

This is UPF0502 protein XCC4136 from Xanthomonas campestris pv. campestris (strain ATCC 33913 / DSM 3586 / NCPPB 528 / LMG 568 / P 25).